Reading from the N-terminus, the 523-residue chain is DNA-(apurinic or apyrimidinic site) endonuclease 2 (523 aa).

Glu42 serves as a coordination point for Mg(2+). The active site involves Tyr151. Residues Asp191, Asn193, and Asp294 each coordinate Mg(2+). The active-site Proton donor/acceptor is Asp191. The segment at 348-392 (MKKNKNNSPTQSENVSASASSGSSPTVSRANSVIDVDAYPPEKRR) is disordered. Over residues 353–362 (NNSPTQSENV) the composition is skewed to polar residues. Positions 458, 461, 484, and 508 each coordinate Zn(2+). The segment at 458 to 517 (CEGHKEPCKYLTVRKPGINYGRKFWICARPVGELIKNSNAVSEEDTQPFQCRFFIWDSDW) adopts a GRF-type zinc-finger fold.

It belongs to the DNA repair enzymes AP/ExoA family. Mg(2+) is required as a cofactor. Requires Mn(2+) as cofactor.

The protein resides in the nucleus. The catalysed reaction is Exonucleolytic cleavage in the 3'- to 5'-direction to yield nucleoside 5'-phosphates.. DNA repair enzyme that cleaves apurinic/apyrimidinic (AP) sites and removes 3'-blocking groups present at single strand breaks of damaged DNA. Provides the majority of the AP-endonuclease (APE) activity. Repairs phleomycin D1-induced DNA damage. Plays a role in oxidative damage repair. The sequence is that of DNA-(apurinic or apyrimidinic site) endonuclease 2 (apn2) from Schizosaccharomyces pombe (strain 972 / ATCC 24843) (Fission yeast).